The chain runs to 21 residues: 40 kDa major outer membrane protein (21 aa).

Disulfide bond interactions within and between MOMP molecules and other components form high molecular-weight oligomers.

Its subcellular location is the cell outer membrane. Structural rigidity of the outer membrane of elementary bodies and porin forming, permitting diffusion of solutes through the intracellular reticulate body membrane. The chain is 40 kDa major outer membrane protein from Actinobacillus pleuropneumoniae (Haemophilus pleuropneumoniae).